Here is a 978-residue protein sequence, read N- to C-terminus: Mineralocorticoid receptor (978 aa).

The segment at 1-602 (METKGYHSLP…STGSSRPSKI (602 aa)) is modulating. The span at 234-243 (SLTCSPSVEN) shows a compositional bias: polar residues. 2 disordered regions span residues 234 to 331 (SLTC…STVG) and 353 to 372 (GAIQ…AHDV). Phosphoserine is present on residues serine 250, serine 259, serine 283, serine 287, and serine 299. The span at 259–300 (SPLSSPLSSMKSPISSPPSHCSVKSPVSSPNNVPLRSSVSSP) shows a compositional bias: low complexity. The span at 301 to 331 (ANLNNSRCSVSSPSNTNNRSTLSSPTASTVG) shows a compositional bias: polar residues. Cysteine 603, cysteine 606, cysteine 620, cysteine 623, cysteine 637, cysteine 643, cysteine 653, and cysteine 656 together coordinate Zn(2+). 2 NR C4-type zinc fingers span residues 603 to 623 (CLVC…CGSC) and 637 to 661 (CAGR…LQKC). Residues 603 to 666 (CLVCGDEASG…RLQKCLQAGM (64 aa)) constitute a DNA-binding region (nuclear receptor). The interval 667 to 719 (NLGARKSKKLGKLKGLHEEQPQQPPPPPPQSPEEGTTYIAPTKEPSVNSALVP) is hinge. The interval 681 to 706 (GLHEEQPQQPPPPPPQSPEEGTTYIA) is disordered. The segment covering 688–697 (QQPPPPPPQS) has biased composition (pro residues). The region spanning 720–958 (QLASITRALT…EFPAMLVEII (239 aa)) is the NR LBD domain. Asparagine 764 and glutamine 770 together coordinate 21-hydroxyprogesterone. The aldosterone site is built by asparagine 764 and glutamine 770. 2 residues coordinate progesterone: asparagine 764 and glutamine 770. An important for coactivator binding region spans residues 776-779 (KWAK). The 21-hydroxyprogesterone site is built by arginine 811 and threonine 939. The aldosterone site is built by arginine 811 and threonine 939. Progesterone contacts are provided by arginine 811 and threonine 939.

This sequence belongs to the nuclear hormone receptor family. NR3 subfamily. As to quaternary structure, heteromultimeric cytoplasmic complex with HSP90, HSP70, and FKBP4, in the absence of ligand. After ligand binding, it translocates to the nucleus and binds to DNA as a homodimer and as a heterodimer with NR3C1. Binds the coactivator NCOA2. May interact with HSD11B2 in the absence of ligand. Binds the coactivators NCOA1, TIF1 and NRIP1. Phosphorylated. As to expression, expressed in heart and kidney.

The protein localises to the cytoplasm. It localises to the nucleus. The protein resides in the endoplasmic reticulum membrane. Functionally, receptor for both mineralocorticoids (MC) such as aldosterone and glucocorticoids (GC) such as corticosterone or cortisol. Binds to mineralocorticoid response elements (MRE) and transactivates target genes. The effect of MC is to increase ion and water transport and thus raise extracellular fluid volume and blood pressure and lower potassium levels. The protein is Mineralocorticoid receptor (Nr3c2) of Mus musculus (Mouse).